The following is a 159-amino-acid chain: Phosphopantetheine adenylyltransferase (159 aa).

Residue T10 coordinates substrate. ATP-binding positions include 10–11 (TF) and H18. Substrate contacts are provided by K42, M74, and R88. Residues 89 to 91 (GLR), E99, and 124 to 130 (WSFISSS) each bind ATP.

This sequence belongs to the bacterial CoaD family. Homohexamer. The cofactor is Mg(2+).

The protein localises to the cytoplasm. The enzyme catalyses (R)-4'-phosphopantetheine + ATP + H(+) = 3'-dephospho-CoA + diphosphate. Its pathway is cofactor biosynthesis; coenzyme A biosynthesis; CoA from (R)-pantothenate: step 4/5. Its function is as follows. Reversibly transfers an adenylyl group from ATP to 4'-phosphopantetheine, yielding dephospho-CoA (dPCoA) and pyrophosphate. This is Phosphopantetheine adenylyltransferase from Citrobacter koseri (strain ATCC BAA-895 / CDC 4225-83 / SGSC4696).